The sequence spans 441 residues: ATP-dependent RNA helicase SUB2 (441 aa).

The segment covering 1–17 (MSHEGEEELLDYSDSEE) has biased composition (acidic residues). A disordered region spans residues 1-47 (MSHEGEEELLDYSDSEEIALPSTTVESGSNGDAKAETTTVKEENTEQ). The segment covering 21–30 (PSTTVESGSN) has biased composition (polar residues). Residues 33–46 (AKAETTTVKEENTE) show a composition bias toward basic and acidic residues. The Q motif signature appears at 57–85 (TGFRDFLLKPELLRAIVDCGFEHPSEVQQ). The region spanning 88-263 (IPQSILGTDV…KKFMSSPLEI (176 aa)) is the Helicase ATP-binding domain. 101-108 (AKAGVGKT) contacts ATP. Residues 210–213 (DECD) carry the DECD box motif. Residues 275–436 (GLQQYYVDVE…PYPAEGVDPS (162 aa)) enclose the Helicase C-terminal domain.

It belongs to the DEAD box helicase family. DECD subfamily.

It localises to the nucleus. It catalyses the reaction ATP + H2O = ADP + phosphate + H(+). In terms of biological role, ATP-binding RNA helicase involved in transcription elongation and required for the export of mRNA out of the nucleus. SUB2 also plays a role in pre-mRNA splicing and spliceosome assembly. May be involved in rDNA and telomeric silencing, and maintenance of genome integrity. The polypeptide is ATP-dependent RNA helicase SUB2 (SUB2) (Yarrowia lipolytica (strain CLIB 122 / E 150) (Yeast)).